Here is a 63-residue protein sequence, read N- to C-terminus: Large ribosomal subunit protein bL35 (63 aa).

The protein belongs to the bacterial ribosomal protein bL35 family.

The chain is Large ribosomal subunit protein bL35 from Campylobacter hominis (strain ATCC BAA-381 / DSM 21671 / CCUG 45161 / LMG 19568 / NCTC 13146 / CH001A).